Reading from the N-terminus, the 122-residue chain is Large ribosomal subunit protein uL18 (122 aa).

The protein belongs to the universal ribosomal protein uL18 family. As to quaternary structure, part of the 50S ribosomal subunit; part of the 5S rRNA/L5/L18/L25 subcomplex. Contacts the 5S and 23S rRNAs.

This is one of the proteins that bind and probably mediate the attachment of the 5S RNA into the large ribosomal subunit, where it forms part of the central protuberance. This chain is Large ribosomal subunit protein uL18, found in Lachnoclostridium phytofermentans (strain ATCC 700394 / DSM 18823 / ISDg) (Clostridium phytofermentans).